Here is a 370-residue protein sequence, read N- to C-terminus: Protein-glutamate methylesterase/protein-glutamine glutaminase of group 1 operon (370 aa).

Positions 4 to 121 (KVLVVDDSGF…SRNPDKVKQL (118 aa)) constitute a Response regulatory domain. Aspartate 55 is modified (4-aspartylphosphate). Over residues 150 to 180 (PASTFTSQAQTRPAAPARAAAPTPAASQSPA) the composition is skewed to low complexity. Positions 150–183 (PASTFTSQAQTRPAAPARAAAPTPAASQSPAPKR) are disordered. In terms of domain architecture, CheB-type methylesterase spans 179-370 (PAPKRKPYKL…IGKHLVEACV (192 aa)). Residues serine 194, histidine 221, and aspartate 314 contribute to the active site.

The protein belongs to the CheB family. In terms of processing, phosphorylated by CheA. Phosphorylation of the N-terminal regulatory domain activates the methylesterase activity.

The protein resides in the cytoplasm. It catalyses the reaction [protein]-L-glutamate 5-O-methyl ester + H2O = L-glutamyl-[protein] + methanol + H(+). The enzyme catalyses L-glutaminyl-[protein] + H2O = L-glutamyl-[protein] + NH4(+). Functionally, involved in chemotaxis. Part of a chemotaxis signal transduction system that modulates chemotaxis in response to various stimuli. Catalyzes the demethylation of specific methylglutamate residues introduced into the chemoreceptors (methyl-accepting chemotaxis proteins or MCP) by CheR. Also mediates the irreversible deamidation of specific glutamine residues to glutamic acid. The sequence is that of Protein-glutamate methylesterase/protein-glutamine glutaminase of group 1 operon from Pseudomonas putida (strain ATCC 47054 / DSM 6125 / CFBP 8728 / NCIMB 11950 / KT2440).